We begin with the raw amino-acid sequence, 590 residues long: Polypeptide N-acetylgalactosaminyltransferase 8 (590 aa).

Topologically, residues 1-11 (MCLDIWRHKKK) are cytoplasmic. A helical; Signal-anchor for type II membrane protein membrane pass occupies residues 12 to 31 (VLPLLLLMAIGSIIYYLYTL). Residues 32–590 (KLEGERDESA…QHFWDNVKTQ (559 aa)) lie on the Lumenal side of the membrane. Residue N77 is glycosylated (N-linked (GlcNAc...) asparagine). Intrachain disulfides connect C117/C345, C336/C419, C459/C475, C502/C517, and C546/C561. Positions 127–236 (LPSVSVVITY…KGWLEPLIAP (110 aa)) are catalytic subdomain A. A substrate-binding site is contributed by D168. Residue D220 participates in Mn(2+) binding. Substrate is bound at residue S221. A Mn(2+)-binding site is contributed by H222. Residue N241 is glycosylated (N-linked (GlcNAc...) asparagine). The catalytic subdomain B stretch occupies residues 291 to 353 (PHKNPIMNGG…PCSRVGHLFR (63 aa)). W322 provides a ligand contact to substrate. H350 is a Mn(2+) binding site. A substrate-binding site is contributed by R353. The Ricin B-type lectin domain maps to 446-573 (ASGVLQSISS…KNHKQQWKFG (128 aa)).

Belongs to the glycosyltransferase 2 family. GalNAc-T subfamily. The cofactor is Mn(2+). As to expression, expressed in developing oocytes and egg chambers. During embryonic stages 9-11, expressed in the primordium of the foregut, midgut and hindgut. During embryonic stages 12-13, expressed in the posterior midgut and hindgut. During embryonic stages 14-15, expression continues in the hindgut. No expression detected during embryonic stages 16-17 or in third instar larvae imaginal disks.

It is found in the golgi apparatus membrane. The enzyme catalyses L-seryl-[protein] + UDP-N-acetyl-alpha-D-galactosamine = a 3-O-[N-acetyl-alpha-D-galactosaminyl]-L-seryl-[protein] + UDP + H(+). The catalysed reaction is L-threonyl-[protein] + UDP-N-acetyl-alpha-D-galactosamine = a 3-O-[N-acetyl-alpha-D-galactosaminyl]-L-threonyl-[protein] + UDP + H(+). It functions in the pathway protein modification; protein glycosylation. In terms of biological role, catalyzes the initial reaction in O-linked oligosaccharide biosynthesis, the transfer of an N-acetyl-D-galactosamine residue to a serine or threonine residue on the protein receptor. It can both act as a peptide transferase that transfers GalNAc onto unmodified peptide substrates, and as a glycopeptide transferase that requires the prior addition of a GalNAc on a peptide before adding additional GalNAc moieties. Prefers both EA2 and the diglycosylated Muc5AC-3/13 as substrates, albeit at very low levels fro Muc5AC-3/13. The chain is Polypeptide N-acetylgalactosaminyltransferase 8 from Drosophila melanogaster (Fruit fly).